The chain runs to 284 residues: Pseudopaline exporter CntI (284 aa).

10 consecutive transmembrane segments (helical) span residues 2 to 22, 34 to 54, 74 to 94, 96 to 116, 122 to 142, 147 to 167, 179 to 199, 209 to 229, 236 to 256, and 259 to 279; these read VLDL…TFSV, LPAA…IYLL, GVMG…IPLA, ASIL…LFLG, AVYW…KPFS, SVYA…SVAI, IVFY…WNDF, GLLL…TRAF, IVAV…WLFW, and VPDA…IALS. EamA domains lie at 8–138 and 151–279; these read SGVL…LMIV and VVGL…IALS.

This sequence belongs to the EamA transporter family.

It localises to the cell inner membrane. Functionally, transports the metallophore pseudopaline, which is involved in the acquisition of nickel and zinc, and thus enables bacterial growth inside the host, where metal access is limited. Is probably involved in the export of pseudopaline. Essential for iron acquisition during the interaction with airway mucus secretions (AMS). The polypeptide is Pseudopaline exporter CntI (Pseudomonas aeruginosa (strain ATCC 15692 / DSM 22644 / CIP 104116 / JCM 14847 / LMG 12228 / 1C / PRS 101 / PAO1)).